The following is a 254-amino-acid chain: Phosphoribosylaminoimidazole-succinocarboxamide synthase (254 aa).

The protein belongs to the SAICAR synthetase family.

The catalysed reaction is 5-amino-1-(5-phospho-D-ribosyl)imidazole-4-carboxylate + L-aspartate + ATP = (2S)-2-[5-amino-1-(5-phospho-beta-D-ribosyl)imidazole-4-carboxamido]succinate + ADP + phosphate + 2 H(+). The protein operates within purine metabolism; IMP biosynthesis via de novo pathway; 5-amino-1-(5-phospho-D-ribosyl)imidazole-4-carboxamide from 5-amino-1-(5-phospho-D-ribosyl)imidazole-4-carboxylate: step 1/2. The chain is Phosphoribosylaminoimidazole-succinocarboxamide synthase from Acidiphilium cryptum (strain JF-5).